Here is a 294-residue protein sequence, read N- to C-terminus: ATP synthase gamma chain (294 aa).

The protein belongs to the ATPase gamma chain family. F-type ATPases have 2 components, CF(1) - the catalytic core - and CF(0) - the membrane proton channel. CF(1) has five subunits: alpha(3), beta(3), gamma(1), delta(1), epsilon(1). CF(0) has three main subunits: a, b and c.

The protein resides in the cell inner membrane. Produces ATP from ADP in the presence of a proton gradient across the membrane. The gamma chain is believed to be important in regulating ATPase activity and the flow of protons through the CF(0) complex. This Rhizorhabdus wittichii (strain DSM 6014 / CCUG 31198 / JCM 15750 / NBRC 105917 / EY 4224 / RW1) (Sphingomonas wittichii) protein is ATP synthase gamma chain.